The primary structure comprises 184 residues: dCTP deaminase (184 aa).

Residues 107–112 (KSTYAR), 131–133 (TLE), Gln152, Tyr166, and Gln176 contribute to the dCTP site. Glu133 serves as the catalytic Proton donor/acceptor.

The protein belongs to the dCTP deaminase family. Homotrimer.

It carries out the reaction dCTP + H2O + H(+) = dUTP + NH4(+). It functions in the pathway pyrimidine metabolism; dUMP biosynthesis; dUMP from dCTP (dUTP route): step 1/2. Functionally, catalyzes the deamination of dCTP to dUTP. In Rhodospirillum centenum (strain ATCC 51521 / SW), this protein is dCTP deaminase.